We begin with the raw amino-acid sequence, 396 residues long: 1-deoxy-D-xylulose 5-phosphate reductoisomerase (396 aa).

Threonine 15, glycine 16, serine 17, isoleucine 18, glycine 41, and asparagine 130 together coordinate NADPH. Lysine 131 provides a ligand contact to 1-deoxy-D-xylulose 5-phosphate. NADPH is bound at residue glutamate 132. Aspartate 155 provides a ligand contact to Mn(2+). Positions 156, 157, 181, and 204 each coordinate 1-deoxy-D-xylulose 5-phosphate. Residue glutamate 157 coordinates Mn(2+). Glycine 210 is a binding site for NADPH. 1-deoxy-D-xylulose 5-phosphate contacts are provided by serine 217, asparagine 222, lysine 223, and glutamate 226. Residue glutamate 226 participates in Mn(2+) binding.

The protein belongs to the DXR family. The cofactor is Mg(2+). Mn(2+) serves as cofactor.

The enzyme catalyses 2-C-methyl-D-erythritol 4-phosphate + NADP(+) = 1-deoxy-D-xylulose 5-phosphate + NADPH + H(+). It functions in the pathway isoprenoid biosynthesis; isopentenyl diphosphate biosynthesis via DXP pathway; isopentenyl diphosphate from 1-deoxy-D-xylulose 5-phosphate: step 1/6. In terms of biological role, catalyzes the NADPH-dependent rearrangement and reduction of 1-deoxy-D-xylulose-5-phosphate (DXP) to 2-C-methyl-D-erythritol 4-phosphate (MEP). This is 1-deoxy-D-xylulose 5-phosphate reductoisomerase from Bifidobacterium longum (strain DJO10A).